A 444-amino-acid chain; its full sequence is Transcription activator AKTR-1 (444 aa).

A DNA-binding region (zn(2)-C6 fungal-type) is located at residues 16-43 (CDFCTQSKLRCNKNKPSCRRCTIQQQPC). Residues 49 to 87 (RRTGRPPKHPRKANDCQEANGQHGEQDPVTSTPGGSCQQ) form a disordered region. Basic residues predominate over residues 50-59 (RTGRPPKHPR). Residues 76–87 (PVTSTPGGSCQQ) show a composition bias toward polar residues.

Its subcellular location is the nucleus. Its function is as follows. Transcription factor that regulates the expression of the gene clusters that mediate the biosynthesis of the host-selective toxins (HSTs) AK-toxins responsible for Japanese pear black spot disease by the Japanese pear pathotype. AK-toxins are esters of 9,10-epoxy 8-hydroxy 9-methyldecatrienoic acid (EDA). On cellular level, AK-toxins affect plasma membrane of susceptible cells and cause a sudden increase in loss of K(+) after a few minutes of toxin treatment. This chain is Transcription activator AKTR-1, found in Alternaria alternata (Alternaria rot fungus).